The primary structure comprises 149 residues: MESLYRVPFLVLECPNLKLKKPPWVHMPSAMTVYALVVVSYFLITGGIIYDVIVEPPSVGSVTDEHGHQRPVAFLAYRVNGQYIMEGLASSFLFTMGGLGFIILDRSNAPNIPKLNRFLLLFIGFVCVLLSFFMARVFMRMKLPGYLMG.

The Cytoplasmic segment spans residues 1 to 32 (MESLYRVPFLVLECPNLKLKKPPWVHMPSAMT). The chain crosses the membrane as a helical span at residues 33–53 (VYALVVVSYFLITGGIIYDVI). The Extracellular portion of the chain corresponds to 54 to 83 (VEPPSVGSVTDEHGHQRPVAFLAYRVNGQY). Residues 84-104 (IMEGLASSFLFTMGGLGFIIL) traverse the membrane as a helical segment. At 105 to 117 (DRSNAPNIPKLNR) the chain is on the cytoplasmic side. Residues 118–138 (FLLLFIGFVCVLLSFFMARVF) traverse the membrane as a helical segment. Residues 139 to 149 (MRMKLPGYLMG) are Extracellular-facing.

The protein belongs to the OSTC family. Component of STT3A-containing oligosaccharyl transferase (OST-A) complex. STT3A-containing complex assembly occurs through the formation of 3 subcomplexes. Subcomplex 1 contains RPN1 and TMEM258, subcomplex 2 contains the STT3A-specific subunits STT3A, DC2/OSTC, and KCP2 as well as the core subunit OST4, and subcomplex 3 contains RPN2, DAD1, and OST48. The OST-A complex can form stable complexes with the Sec61 complex or with both the Sec61 and TRAP complexes. Interacts with PSEN1 and NCSTN; indicative for an association with the gamma-secretase complex.

It is found in the endoplasmic reticulum. Its subcellular location is the membrane. The protein operates within protein modification; protein glycosylation. In terms of biological role, subunit of STT3A-containing oligosaccharyl transferase (OST-A) complex that catalyzes the initial transfer of a defined glycan (Glc(3)Man(9)GlcNAc(2) in eukaryotes) from the lipid carrier dolichol-pyrophosphate to an asparagine residue within an Asn-X-Ser/Thr consensus motif in nascent polypeptide chains, the first step in protein N-glycosylation. N-glycosylation occurs cotranslationally and the complex associates with the Sec61 complex at the channel-forming translocon complex that mediates protein translocation across the endoplasmic reticulum (ER). Within the OST-A complex, acts as an adapter that anchors the OST-A complex to the Sec61 complex. May be involved in N-glycosylation of APP (amyloid-beta precursor protein). Can modulate gamma-secretase cleavage of APP by enhancing endoprotelysis of PSEN1. The protein is Oligosaccharyltransferase complex subunit OSTC of Bos taurus (Bovine).